Here is a 311-residue protein sequence, read N- to C-terminus: Haloalkane dehalogenase (311 aa).

An AB hydrolase-1 domain is found at 30 to 148 (AIVFQHGNPS…WDDFPDEVAQ (119 aa)). The active-site Nucleophile is D107. E131 (proton donor) is an active-site residue. The active-site Proton acceptor is H272.

The protein belongs to the haloalkane dehalogenase family. Type 2 subfamily. In terms of assembly, monomer.

It catalyses the reaction 1-haloalkane + H2O = a halide anion + a primary alcohol + H(+). Functionally, catalyzes hydrolytic cleavage of carbon-halogen bonds in halogenated aliphatic compounds, leading to the formation of the corresponding primary alcohols, halide ions and protons. The chain is Haloalkane dehalogenase from Mycolicibacterium smegmatis (strain ATCC 700084 / mc(2)155) (Mycobacterium smegmatis).